Consider the following 95-residue polypeptide: RING finger protein Z (95 aa).

Gly2 carries N-myristoyl glycine; by host lipidation. An RING-type; atypical zinc finger spans residues 38–74 (CKRCWFATKGLIACSDHYLCLNCLTIMLSDGNFCEVC). Positions 88-91 (PSAP) match the PTAP/PSAP motif motif.

The protein belongs to the arenaviridae Z protein family. In terms of assembly, interacts with protein NP; this interaction probably directs the encapsidated genome to budding sites. Interacts (via RING domain) with polymerase L; this interaction inhibits viral transcription and replication, Z partially blocks the product exit tunnel for the releasing nascent RNA product. Interacts with the glycoprotein complex; this interaction plays a role in virion budding. Interacts with host eIF4E; this interaction results in eIF4E reduced affinity for its substrate, the 5'-m7 G cap structure. Interacts (via late-budding domain) with host TSG101; this interaction is essential for budding and release of viral particles. Interacts with host RPLP0; this interaction may serve to load ribosome-like particles inside the virion. Interacts with host PML; this interaction induces PML bodies redistribution in the cytoplasm upon viral infection. Post-translationally, myristoylation is required for the role of RING finger protein Z in assembly and budding.

The protein localises to the virion. It is found in the host cytoplasm. The protein resides in the host perinuclear region. Its subcellular location is the host cell membrane. Plays a crucial role in virion assembly and budding. Expressed late in the virus life cycle, it acts as an inhibitor of viral transcription and RNA synthesis by interacting with the viral polymerase L. Presumably recruits the NP encapsidated genome to cellular membranes at budding sites via direct interaction with NP. Plays critical roles in the final steps of viral release by interacting with host TSG101, a member of the vacuolar protein-sorting pathway and using other cellular host proteins involved in vesicle formation pathway. The budding of the virus progeny occurs after association of protein Z with the viral glycoprotein complex SSP-GP1-GP2 at the cell periphery, step that requires myristoylation of protein Z. Also selectively represses protein production by associating with host eIF4E. In cell-based minigenome assay, has an inhibitory effect on the ribonucleoprotein machinery (vRNP), which is responsible for the replication and transcription of the viral genome. This Sooretamys angouya (Paraguayan rice rat) protein is RING finger protein Z.